A 122-amino-acid chain; its full sequence is uncharacterized protein (122 aa).

The first 20 residues, 1–20 (MGFHFCIWIIFLLPPPCKKC), serve as a signal peptide directing secretion.

Its subcellular location is the secreted. This is an uncharacterized protein from Homo sapiens (Human).